The sequence spans 358 residues: Snurportin-1 (358 aa).

An N-acetylmethionine modification is found at methionine 1. 2 disordered regions span residues 1–26 (MEELSQALASSFSVSQELNSTAAPHP) and 69–90 (DWTGMESGEEENKKDEEEMDID). The interval 1–65 (MEELSQALAS…LDYVNHARRL (65 aa)) is necessary for interaction with KPNB1 and m3G-cap U1 and U5 snRNP import receptor activity. A necessary for interaction with XPO1 region spans residues 1-160 (MEELSQALAS…NRFSSLLPGG (160 aa)). Residues 7–22 (ALASSFSVSQELNSTA) are compositionally biased toward polar residues. The IBB domain occupies 11–73 (SFSVSQELNS…RLAEDDWTGM (63 aa)). Serine 75 carries the post-translational modification Phosphoserine. The interaction with m3G-cap structure stretch occupies residues 128–130 (GKR). Residues 210-329 (MHSKLPEEEG…DTKEKLTHKA (120 aa)) form a necessary for binding to the m3G-cap structure region. A compositionally biased stretch (basic and acidic residues) spans 315–341 (KRSQEDTKEKLTHKASENGHYELEHLS). The tract at residues 315-358 (KRSQEDTKEKLTHKASENGHYELEHLSTPKLRNPPHSSESLMDN) is disordered. Positions 349 to 358 (PHSSESLMDN) are enriched in polar residues. Serine 351 carries the post-translational modification Phosphoserine.

It belongs to the snurportin family. Component of an import snRNP complex composed of KPNB1, SNUPN, SMN1 and ZNF259. Component of a nuclear export receptor complex composed of KPNB1, Ran, SNUPN and XPO1. Found in a trimeric export complex with SNUPN, Ran and XPO1. Interacts (via IBB domain) with KPNB1; the interaction is direct. Interacts with DDX20, IPO7, SMN1, SNRPB and XPO1. Interacts directly with XPO1. Its interaction with XPO1 and binding to m3G-cap U snRNPs appears to be mutually exclusive. Can form homomers.

It localises to the nucleus. Its subcellular location is the cytoplasm. Its function is as follows. Functions as an U snRNP-specific nuclear import adapter. Involved in the trimethylguanosine (m3G)-cap-dependent nuclear import of U snRNPs. Binds specifically to the terminal m3G-cap U snRNAs. This chain is Snurportin-1 (Snupn), found in Mus musculus (Mouse).